Here is a 320-residue protein sequence, read N- to C-terminus: ATP-dependent 6-phosphofructokinase (320 aa).

Gly-12 is a binding site for ATP. Residues Arg-22–Arg-26 and Arg-55–Asp-60 each bind ADP. ATP contacts are provided by residues Arg-73 to Phe-74 and Gly-103 to Ser-106. A Mg(2+)-binding site is contributed by Asp-104. Position 126-128 (Thr-126–Asp-128) interacts with substrate. Asp-128 acts as the Proton acceptor in catalysis. Arg-155 is a binding site for ADP. Residues Arg-163 and Met-170–Arg-172 contribute to the substrate site. Residues Gly-186–Glu-188, Lys-212, and Lys-214–His-216 each bind ADP. Residues Glu-223, Arg-244, and His-250 to Arg-253 contribute to the substrate site.

Belongs to the phosphofructokinase type A (PFKA) family. ATP-dependent PFK group I subfamily. Prokaryotic clade 'B1' sub-subfamily. Homotetramer. Mg(2+) is required as a cofactor.

Its subcellular location is the cytoplasm. The enzyme catalyses beta-D-fructose 6-phosphate + ATP = beta-D-fructose 1,6-bisphosphate + ADP + H(+). It participates in carbohydrate degradation; glycolysis; D-glyceraldehyde 3-phosphate and glycerone phosphate from D-glucose: step 3/4. Its activity is regulated as follows. Allosterically activated by ADP and other diphosphonucleosides, and allosterically inhibited by phosphoenolpyruvate. Catalyzes the phosphorylation of D-fructose 6-phosphate to fructose 1,6-bisphosphate by ATP, the first committing step of glycolysis. The protein is ATP-dependent 6-phosphofructokinase of Buchnera aphidicola subsp. Acyrthosiphon pisum (strain 5A).